Here is a 229-residue protein sequence, read N- to C-terminus: Type-5 uracil-DNA glycosylase (229 aa).

Positions 19, 22, 123, and 138 each coordinate [4Fe-4S] cluster.

It belongs to the uracil-DNA glycosylase (UDG) superfamily. Type 5 (UDGb) family.

Its function is as follows. DNA glycosylase with broad substrate specificity. The polypeptide is Type-5 uracil-DNA glycosylase (Mycobacterium leprae (strain TN)).